Consider the following 506-residue polypeptide: GMP synthase [glutamine-hydrolyzing] (506 aa).

The Glutamine amidotransferase type-1 domain occupies 4–192 (KLIILDFGSQ…FLDICGMKRD (189 aa)). Residue Cys-79 is the Nucleophile of the active site. Residues His-167 and Glu-169 contribute to the active site. Positions 193-381 (WTPASFIEAT…LGMMPHLIHR (189 aa)) constitute a GMPS ATP-PPase domain. 220-226 (SGGVDSS) serves as a coordination point for ATP.

In terms of assembly, homodimer.

It carries out the reaction XMP + L-glutamine + ATP + H2O = GMP + L-glutamate + AMP + diphosphate + 2 H(+). It participates in purine metabolism; GMP biosynthesis; GMP from XMP (L-Gln route): step 1/1. Its function is as follows. Catalyzes the synthesis of GMP from XMP. This Porphyromonas gingivalis (strain ATCC 33277 / DSM 20709 / CIP 103683 / JCM 12257 / NCTC 11834 / 2561) protein is GMP synthase [glutamine-hydrolyzing].